A 470-amino-acid polypeptide reads, in one-letter code: Uronate isomerase (470 aa).

This sequence belongs to the metallo-dependent hydrolases superfamily. Uronate isomerase family.

It catalyses the reaction D-glucuronate = D-fructuronate. The enzyme catalyses aldehydo-D-galacturonate = keto-D-tagaturonate. It participates in carbohydrate metabolism; pentose and glucuronate interconversion. This Cronobacter sakazakii (strain ATCC BAA-894) (Enterobacter sakazakii) protein is Uronate isomerase.